A 541-amino-acid chain; its full sequence is Glycogen synthase (541 aa).

An ADP-alpha-D-glucose-binding site is contributed by Lys-17. The tract at residues 497–541 is disordered; that stretch reads LARPASPPDTAPVGKPARRRRTTALSTTARAHPVARAAGREKIRA.

It belongs to the glycosyltransferase 1 family. Bacterial/plant glycogen synthase subfamily.

It catalyses the reaction [(1-&gt;4)-alpha-D-glucosyl](n) + ADP-alpha-D-glucose = [(1-&gt;4)-alpha-D-glucosyl](n+1) + ADP + H(+). It participates in glycan biosynthesis; glycogen biosynthesis. In terms of biological role, synthesizes alpha-1,4-glucan chains using ADP-glucose. This Ralstonia nicotianae (strain ATCC BAA-1114 / GMI1000) (Ralstonia solanacearum) protein is Glycogen synthase.